Here is a 139-residue protein sequence, read N- to C-terminus: Large ribosomal subunit protein bL17 (139 aa).

Residues 120 to 139 (ESAKGQDSGPVHVEGDEEAA) are disordered.

Belongs to the bacterial ribosomal protein bL17 family. Part of the 50S ribosomal subunit. Contacts protein L32.

This chain is Large ribosomal subunit protein bL17, found in Parvibaculum lavamentivorans (strain DS-1 / DSM 13023 / NCIMB 13966).